The primary structure comprises 332 residues: Cyclin-D1-binding protein 1 (332 aa).

Residue Ala2 is modified to N-acetylalanine. Interaction with TCF3 stretches follow at residues 2 to 184 (ASAT…VDFV) and 150 to 332 (ISYN…CLLD). 2 interaction with RPLP0 regions span residues 2 to 190 (ASAT…AHEE) and 240 to 332 (LIIP…CLLD). The segment at 2 to 208 (ASATAPAAAA…DPYSGLLNDT (207 aa)) is required for interaction with CCND1.

It belongs to the CCNDBP1 family. As to quaternary structure, interacts with CCND1 and GRAP2. May also interact with COPS5, RPLP0, SIRT6, SYF2 and TCF3. In terms of processing, phosphorylated.

The protein localises to the cytoplasm. It localises to the nucleus. Functionally, may negatively regulate cell cycle progression. May act at least in part via inhibition of the cyclin-D1/CDK4 complex, thereby preventing phosphorylation of RB1 and blocking E2F-dependent transcription. In Macaca fascicularis (Crab-eating macaque), this protein is Cyclin-D1-binding protein 1 (CCNDBP1).